A 336-amino-acid polypeptide reads, in one-letter code: MVIEKIWFHRHPLGYLLWPLLWPFSVLFGVISRSRRKAYQTGDKPSYRAPLPVVVVGNITAGGNGKTPVVVWLVETLQNLGYRPGVVSRGYGAKAPSYPLVVNEQTPAQHCGDEPKLIFQRTKAPVAVDPVRSQAVKALLEHGVNVIVTDDGLQHYALQRDIEIAVVDGVRRFGNQELIPLGPLREPVSRLDEVDFIITNGGVAKANEIAMRLQPTDAVNLKTGERCAVSKLTRLCAMAGIGHPSRFFNTLRELNADLVHCQGFADHQAFDAAQLNQLAQQGAHLIMTEKDAVKCAEFAQPNWWYLPVSAQFAPEAEQRIVDKIKEVMEPYGSPSA.

Residue 60-67 (TAGGNGKT) coordinates ATP.

The protein belongs to the LpxK family.

It carries out the reaction a lipid A disaccharide + ATP = a lipid IVA + ADP + H(+). It functions in the pathway glycolipid biosynthesis; lipid IV(A) biosynthesis; lipid IV(A) from (3R)-3-hydroxytetradecanoyl-[acyl-carrier-protein] and UDP-N-acetyl-alpha-D-glucosamine: step 6/6. Functionally, transfers the gamma-phosphate of ATP to the 4'-position of a tetraacyldisaccharide 1-phosphate intermediate (termed DS-1-P) to form tetraacyldisaccharide 1,4'-bis-phosphate (lipid IVA). This chain is Tetraacyldisaccharide 4'-kinase, found in Vibrio cholerae serotype O1 (strain ATCC 39315 / El Tor Inaba N16961).